Here is a 216-residue protein sequence, read N- to C-terminus: Probable GTP-binding protein EngB (216 aa).

Residues 21–192 form the EngB-type G domain; sequence DAPQIALAGR…WRELRALAAG (172 aa). GTP-binding positions include 29–36, 56–60, 75–78, 142–145, and 170–173; these read GRSNVGKS, GKTRS, DLPG, TKGD, and VTAS. Mg(2+) is bound by residues Ser36 and Thr58. The disordered stretch occupies residues 195–216; sequence SADDEAEDAPSDTIDAIDDVTA. The span at 196 to 216 shows a compositional bias: acidic residues; that stretch reads ADDEAEDAPSDTIDAIDDVTA.

It belongs to the TRAFAC class TrmE-Era-EngA-EngB-Septin-like GTPase superfamily. EngB GTPase family. The cofactor is Mg(2+).

Its function is as follows. Necessary for normal cell division and for the maintenance of normal septation. The protein is Probable GTP-binding protein EngB of Nitratidesulfovibrio vulgaris (strain DP4) (Desulfovibrio vulgaris).